A 218-amino-acid polypeptide reads, in one-letter code: Cytidylate kinase (218 aa).

G21 to T29 contributes to the ATP binding site.

This sequence belongs to the cytidylate kinase family. Type 1 subfamily.

The protein resides in the cytoplasm. The catalysed reaction is CMP + ATP = CDP + ADP. The enzyme catalyses dCMP + ATP = dCDP + ADP. The sequence is that of Cytidylate kinase from Rickettsia canadensis (strain McKiel).